A 178-amino-acid chain; its full sequence is Large ribosomal subunit protein uL6 (178 aa).

The protein belongs to the universal ribosomal protein uL6 family. Part of the 50S ribosomal subunit.

Functionally, this protein binds to the 23S rRNA, and is important in its secondary structure. It is located near the subunit interface in the base of the L7/L12 stalk, and near the tRNA binding site of the peptidyltransferase center. This Streptococcus thermophilus (strain CNRZ 1066) protein is Large ribosomal subunit protein uL6.